The primary structure comprises 658 residues: Threonine--tRNA ligase (658 aa).

Positions 1 to 64 (MLNSVSLTFP…GKSGKVEIIT (64 aa)) constitute a TGS domain. The tract at residues 246–549 (DHRKLGREMD…LIENYSGHFP (304 aa)) is catalytic. The Zn(2+) site is built by Cys343, His394, and His526.

Belongs to the class-II aminoacyl-tRNA synthetase family. Homodimer. It depends on Zn(2+) as a cofactor.

It is found in the cytoplasm. The enzyme catalyses tRNA(Thr) + L-threonine + ATP = L-threonyl-tRNA(Thr) + AMP + diphosphate + H(+). In terms of biological role, catalyzes the attachment of threonine to tRNA(Thr) in a two-step reaction: L-threonine is first activated by ATP to form Thr-AMP and then transferred to the acceptor end of tRNA(Thr). Also edits incorrectly charged L-seryl-tRNA(Thr). In Mesorhizobium japonicum (strain LMG 29417 / CECT 9101 / MAFF 303099) (Mesorhizobium loti (strain MAFF 303099)), this protein is Threonine--tRNA ligase.